The sequence spans 234 residues: MTAHINAQPTDFAETVIMPGDPLRAKYIAETYLTDAVEVTNVRNMLGYTGYYQGQRISVMGHGMGISSMVLYGHELINFFGVKRIIRIGSLGATQQHVEMRDVILAQAAGTDSPTNAKRSSGYHMATSATFSLLHKAYTKANEKGISVKVGNVFSGDLYYDPDEDMIPALERFGVLGIDMEVAGLYGLAHQQGIESLAILTVSDHCLTGEETTAQERQLSFNNMIELALETALN.

A purine D-ribonucleoside is bound at residue His4. Phosphate is bound by residues Gly20, Arg24, Arg43, and 87 to 90 (RIGS). Residues 179 to 181 (DME) and 203 to 204 (SD) contribute to the a purine D-ribonucleoside site. Asp204 functions as the Proton donor in the catalytic mechanism.

It belongs to the PNP/UDP phosphorylase family. In terms of assembly, homohexamer; trimer of homodimers.

The catalysed reaction is a purine D-ribonucleoside + phosphate = a purine nucleobase + alpha-D-ribose 1-phosphate. It carries out the reaction a purine 2'-deoxy-D-ribonucleoside + phosphate = a purine nucleobase + 2-deoxy-alpha-D-ribose 1-phosphate. In terms of biological role, catalyzes the reversible phosphorolytic breakdown of the N-glycosidic bond in the beta-(deoxy)ribonucleoside molecules, with the formation of the corresponding free purine bases and pentose-1-phosphate. The protein is Purine nucleoside phosphorylase DeoD-type of Shewanella oneidensis (strain ATCC 700550 / JCM 31522 / CIP 106686 / LMG 19005 / NCIMB 14063 / MR-1).